A 205-amino-acid polypeptide reads, in one-letter code: Variable small protein 11 (205 aa).

The N-terminal stretch at 1 to 18 (MRKRISAIIMTLFMVFMS) is a signal peptide. The N-palmitoyl cysteine moiety is linked to residue Cys-19. The S-diacylglycerol cysteine moiety is linked to residue Cys-19.

It belongs to the variable small protein (Vsp) family.

Its subcellular location is the cell outer membrane. In terms of biological role, the Vlp and Vsp proteins are antigenically distinct proteins, only one vlp or vsp gene is transcriptionally active at any one time. Switching between these genes is a mechanism of host immune response evasion. In Borrelia hermsii, this protein is Variable small protein 11.